The following is a 500-amino-acid chain: L-arabinose isomerase (500 aa).

Mn(2+) is bound by residues E306, E333, H350, and H450.

Belongs to the arabinose isomerase family. Homohexamer. It depends on Mn(2+) as a cofactor.

It catalyses the reaction beta-L-arabinopyranose = L-ribulose. It functions in the pathway carbohydrate degradation; L-arabinose degradation via L-ribulose; D-xylulose 5-phosphate from L-arabinose (bacterial route): step 1/3. Its function is as follows. Catalyzes the conversion of L-arabinose to L-ribulose. The sequence is that of L-arabinose isomerase from Escherichia coli O17:K52:H18 (strain UMN026 / ExPEC).